Consider the following 415-residue polypeptide: Casein kinase I isoform delta (415 aa).

Residues 9–277 (YRLGRKIGSG…YLRQLFRNLF (269 aa)) enclose the Protein kinase domain. ATP is bound by residues 15 to 23 (IGSGSFGDI) and Lys38. Residue Asp128 is the Proton acceptor of the active site. The interval 278 to 364 (HRQGFSYDYV…TSPRPVSGME (87 aa)) is centrosomal localization signal (CLS). The segment covering 301–315 (ADDAERERRDREERL) has biased composition (basic and acidic residues). The interval 301-415 (ADDAERERRD…SSGLQSVVHR (115 aa)) is disordered. The autoinhibitory stretch occupies residues 317 to 342 (HSRNPATRGLPSTASGRLRGTQEVAP). Phosphoserine is present on residues Ser328 and Ser331. Positions 347-358 (TPTSHTANTSPR) are enriched in polar residues. Position 370 is a phosphoserine (Ser370). Arg375 carries the post-translational modification Omega-N-methylarginine. Residues 380–400 (NVSSSDLTGRQDTSRMSTSQI) are compositionally biased toward polar residues. Ser382, Ser383, Ser384, Pro401, Ser407, and Ser411 each carry phosphoserine.

Belongs to the protein kinase superfamily. CK1 Ser/Thr protein kinase family. Casein kinase I subfamily. Monomer. Component of the circadian core oscillator, which includes the CRY proteins, CLOCK, or NPAS2, BMAL1 or BMAL2, CSNK1D and/or CSNK1E, TIMELESS and the PER proteins. Interacts directly with PER1 and PER2 which may lead to their degradation. Interacts with MAP1A. Interacts with MAPT/TAU, DBNDD2, AIB1/NCOA3 and ESR1. Interacts with AKAP9/AKAP450; this interaction promotes centrosomal subcellular location. Binds to tubulins in mitotic cells upon DNA damage. Interacts with GJA1. Interacts with SNAPIN. Interacts with DNMT1. Interacts with DDX3X; this interaction enhances CSNK1D kinase activity in vitro, but it is unclear whether this interaction is physiologically relevant. Interacts with FAM83A, FAM83B, FAM83E and FAM83H (via DUF1669). Autophosphorylated on serine and threonine residues; this autophosphorylation represses activity. Reactivated by phosphatase-mediated dephosphorylation. May be dephosphorylated by PP1. In terms of tissue distribution, expressed ubiquitously. However, kinase activity is not uniform, with highest kinase activity in splenocytes.

It is found in the cytoplasm. It localises to the nucleus. The protein localises to the cytoskeleton. The protein resides in the microtubule organizing center. Its subcellular location is the centrosome. It is found in the perinuclear region. It localises to the cell membrane. The protein localises to the spindle. The protein resides in the golgi apparatus. It carries out the reaction L-seryl-[protein] + ATP = O-phospho-L-seryl-[protein] + ADP + H(+). It catalyses the reaction L-threonyl-[protein] + ATP = O-phospho-L-threonyl-[protein] + ADP + H(+). The catalysed reaction is L-seryl-[tau protein] + ATP = O-phospho-L-seryl-[tau protein] + ADP + H(+). The enzyme catalyses L-threonyl-[tau protein] + ATP = O-phospho-L-threonyl-[tau protein] + ADP + H(+). Exhibits substrate-dependent heparin activation. Drug-mediated inhibition leads to a delay of the oscillations with the magnitude of this effect dependent upon the timing of drug administration. Inhibited by phosphorylation. In terms of biological role, essential serine/threonine-protein kinase that regulates diverse cellular growth and survival processes including Wnt signaling, DNA repair and circadian rhythms. It can phosphorylate a large number of proteins. Casein kinases are operationally defined by their preferential utilization of acidic proteins such as caseins as substrates. Phosphorylates connexin-43/GJA1, MAP1A, SNAPIN, MAPT/TAU, TOP2A, DCK, HIF1A, EIF6, p53/TP53, DVL2, DVL3, ESR1, AIB1/NCOA3, DNMT1, PKD2, YAP1, PER1 and PER2. Central component of the circadian clock. In balance with PP1, determines the circadian period length through the regulation of the speed and rhythmicity of PER1 and PER2 phosphorylation. Controls PER1 and PER2 nuclear transport and degradation. YAP1 phosphorylation promotes its SCF(beta-TRCP) E3 ubiquitin ligase-mediated ubiquitination and subsequent degradation. DNMT1 phosphorylation reduces its DNA-binding activity. Phosphorylation of ESR1 and AIB1/NCOA3 stimulates their activity and coactivation. Phosphorylation of DVL2 and DVL3 regulates WNT3A signaling pathway that controls neurite outgrowth. Phosphorylates NEDD9/HEF1. EIF6 phosphorylation promotes its nuclear export. Triggers down-regulation of dopamine receptors in the forebrain. Activates DCK in vitro by phosphorylation. TOP2A phosphorylation favors DNA cleavable complex formation. May regulate the formation of the mitotic spindle apparatus in extravillous trophoblast. Modulates connexin-43/GJA1 gap junction assembly by phosphorylation. Probably involved in lymphocyte physiology. Regulates fast synaptic transmission mediated by glutamate. In Mus musculus (Mouse), this protein is Casein kinase I isoform delta (Csnk1d).